The following is an 89-amino-acid chain: Cell division protein FtsB (89 aa).

The Cytoplasmic segment spans residues 1-3; the sequence is MRP. The helical transmembrane segment at 4 to 21 threads the bilayer; the sequence is IIAILIALFILLQYQLWF. Residues 22–89 are Periplasmic-facing; the sequence is AAGGIVSVHH…KNEVFYQIVK (68 aa). The stretch at 29–62 forms a coiled coil; it reads VHHLNENINHQIMENQKLKDRNTALLADIDDLKH.

Belongs to the FtsB family. As to quaternary structure, part of a complex composed of FtsB, FtsL and FtsQ.

The protein localises to the cell inner membrane. Essential cell division protein. May link together the upstream cell division proteins, which are predominantly cytoplasmic, with the downstream cell division proteins, which are predominantly periplasmic. In Coxiella burnetii (strain RSA 493 / Nine Mile phase I), this protein is Cell division protein FtsB.